The primary structure comprises 197 residues: RNA polymerase II subunit A C-terminal domain phosphatase ssup-72 (197 aa).

Serine 39 bears the Phosphoserine mark.

This sequence belongs to the SSU72 phosphatase family. As to quaternary structure, may interact with synd-1 (via C-terminus); the interaction may prevent ssup-72 binding to RNA polymerase II ama-1. May interact with RNA polymerase II ama-1. Post-translationally, may be phosphorylated by kin-20. In terms of tissue distribution, expressed in epidermis, intestine and nervous system.

The protein localises to the nucleus. It carries out the reaction O-phospho-L-seryl-[protein] + H2O = L-seryl-[protein] + phosphate. It catalyses the reaction O-phospho-L-threonyl-[protein] + H2O = L-threonyl-[protein] + phosphate. Functionally, protein phosphatase that dephosphorylates 'Ser-5' of the heptad repeats YSPTSPS in the C-terminal domain of the large RNA polymerase II subunit ama-1. By regulating the phosphorylation status of ama-1 and thus ama-1 binding to specific polyadenylation sites, regulates alternative polyadenylation of pre-mRNAs, including unc-44 and dlk-1 mRNAs. This results in the tissue-specific expression of unc-44 isoforms. In Caenorhabditis elegans, this protein is RNA polymerase II subunit A C-terminal domain phosphatase ssup-72.